The chain runs to 104 residues: L-rhamnose mutarotase (104 aa).

Tyrosine 18 lines the substrate pocket. Histidine 22 acts as the Proton donor in catalysis. Substrate-binding positions include tyrosine 41 and 76–77 (WW).

It belongs to the rhamnose mutarotase family. As to quaternary structure, homodimer.

Its subcellular location is the cytoplasm. It carries out the reaction alpha-L-rhamnose = beta-L-rhamnose. Its pathway is carbohydrate metabolism; L-rhamnose metabolism. In terms of biological role, involved in the anomeric conversion of L-rhamnose. The chain is L-rhamnose mutarotase from Escherichia coli O127:H6 (strain E2348/69 / EPEC).